The following is a 475-amino-acid chain: Eukaryotic translation initiation factor 3 subunit L (475 aa).

Positions 257–451 (DAIRMFSHIL…DLDYAMQGDL (195 aa)) constitute a PCI domain.

This sequence belongs to the eIF-3 subunit L family. Component of the eukaryotic translation initiation factor 3 (eIF-3) complex.

It localises to the cytoplasm. Component of the eukaryotic translation initiation factor 3 (eIF-3) complex, which is involved in protein synthesis of a specialized repertoire of mRNAs and, together with other initiation factors, stimulates binding of mRNA and methionyl-tRNAi to the 40S ribosome. The eIF-3 complex specifically targets and initiates translation of a subset of mRNAs involved in cell proliferation. This chain is Eukaryotic translation initiation factor 3 subunit L, found in Botryotinia fuckeliana (strain B05.10) (Noble rot fungus).